The chain runs to 472 residues: Uronate isomerase (472 aa).

It belongs to the metallo-dependent hydrolases superfamily. Uronate isomerase family.

It carries out the reaction D-glucuronate = D-fructuronate. It catalyses the reaction aldehydo-D-galacturonate = keto-D-tagaturonate. It participates in carbohydrate metabolism; pentose and glucuronate interconversion. This is Uronate isomerase from Xanthomonas axonopodis pv. citri (strain 306).